The chain runs to 448 residues: Probable 3-ketoacyl-CoA thiolase (448 aa).

Cysteine 110 acts as the Acyl-thioester intermediate in catalysis. Residues histidine 402 and cysteine 432 each act as proton acceptor in the active site.

The protein belongs to the thiolase-like superfamily. Thiolase family.

It localises to the mitochondrion. The catalysed reaction is an acyl-CoA + acetyl-CoA = a 3-oxoacyl-CoA + CoA. It participates in lipid metabolism; fatty acid beta-oxidation. In terms of biological role, mitochondrial enzyme that catalyzes reactions of the mitochondrial beta-oxidation pathway. This Caenorhabditis elegans protein is Probable 3-ketoacyl-CoA thiolase.